The sequence spans 470 residues: N amino acid transport system protein (470 aa).

Basic and acidic residues predominate over residues Met1–Asp11. Positions Met1 to Ser21 are disordered. Over Met1–Lys56 the chain is Extracellular. 2 helical membrane passes run Arg57 to Ala77 and Phe78 to Ile98. At Tyr99–Glu131 the chain is on the extracellular side. A helical membrane pass occupies residues Ile132 to Gly152. Residues Thr153–Ser168 lie on the Cytoplasmic side of the membrane. The next 2 helical transmembrane spans lie at Leu169–Ala189 and Val191–Ile211. Over Ala212 to Asp236 the chain is Cytoplasmic. A helical transmembrane segment spans residues Leu237–Met257. The Extracellular segment spans residues Cys258 to Ser275. The chain crosses the membrane as a helical span at residues Ile276–Ala296. Topologically, residues Phe297–Lys316 are cytoplasmic. A helical transmembrane segment spans residues Val317–Val337. Residues Ser338–Pro357 lie on the Extracellular side of the membrane. Residues Ala358–Ala378 traverse the membrane as a helical segment. Over Glu379–Asp386 the chain is Cytoplasmic. Residues Leu387–Met407 traverse the membrane as a helical segment. Residues Tyr408 to Ala427 are Extracellular-facing. The helical transmembrane segment at Leu428–Ile448 threads the bilayer. Residues Gln449 to Ala470 lie on the Cytoplasmic side of the membrane.

Belongs to the amino acid/polyamine transporter 2 family.

It localises to the membrane. Functionally, required for the transport of neutral aliphatic and aromatic amino acids via the N system. This Neurospora crassa (strain ATCC 24698 / 74-OR23-1A / CBS 708.71 / DSM 1257 / FGSC 987) protein is N amino acid transport system protein (mtr).